Here is a 338-residue protein sequence, read N- to C-terminus: Glycerol-3-phosphate dehydrogenase [NAD(P)+] (338 aa).

The NADPH site is built by W11, R30, and K109. K109, G143, and S145 together coordinate sn-glycerol 3-phosphate. A147 is a binding site for NADPH. Sn-glycerol 3-phosphate contacts are provided by K198, D251, S261, R262, and N263. K198 (proton acceptor) is an active-site residue. Position 262 (R262) interacts with NADPH. Residues V286 and E288 each coordinate NADPH.

Belongs to the NAD-dependent glycerol-3-phosphate dehydrogenase family.

It localises to the cytoplasm. The catalysed reaction is sn-glycerol 3-phosphate + NAD(+) = dihydroxyacetone phosphate + NADH + H(+). The enzyme catalyses sn-glycerol 3-phosphate + NADP(+) = dihydroxyacetone phosphate + NADPH + H(+). It functions in the pathway membrane lipid metabolism; glycerophospholipid metabolism. Catalyzes the reduction of the glycolytic intermediate dihydroxyacetone phosphate (DHAP) to sn-glycerol 3-phosphate (G3P), the key precursor for phospholipid synthesis. In Cupriavidus taiwanensis (strain DSM 17343 / BCRC 17206 / CCUG 44338 / CIP 107171 / LMG 19424 / R1) (Ralstonia taiwanensis (strain LMG 19424)), this protein is Glycerol-3-phosphate dehydrogenase [NAD(P)+].